Consider the following 233-residue polypeptide: Bcl-2-like protein 1 (233 aa).

The BH4 signature appears at 4–24; the sequence is SNRELVVDFLSYKLSQKGYSW. Residues 28-71 are disordered; that stretch reads SDVEENRTEAPEGTESEMETPSAINGNPSWHLADSPAVNGATGH. At Ser-49 the chain carries Phosphoserine; by PLK3. Ser-62 carries the post-translational modification Phosphoserine; by CDK1. The BH3 motif lies at 86 to 100; that stretch reads VKQALREAGDEFELR. A BH1 motif is present at residues 129–148; it reads ELFRDGVNWGRIVAFFSFGG. The BH2 motif lies at 180–195; the sequence is PWIQENGGWDTFVELY. Residues 210–226 form a helical membrane-spanning segment; that stretch reads FNRWFLTGMTVAGVVLL.

This sequence belongs to the Bcl-2 family. Homodimer. Interacts with BCL2L11. Interacts with BAD. Interacts with PGAM5. Interacts with HEBP2. Interacts with p53/TP53 and BBC3; interaction with BBC3 disrupts the interaction with p53/TP53. Interacts with ATP5F1A and ATP5F1B; the interactions mediate the association of isoform Bcl-X(L) with the mitochondrial membrane ATP synthase F(1)F(0) ATP synthase. Interacts with VDAC1. Interacts with BCL2L11 (via BH3). Interacts with RNF183. Interacts with GIMAP3/IAN4 and GIMAP5/IAN5. Interacts with GIMAP5 and HSPA8/HSC70; the interaction between HSPA8 and BCL2L1 is impaired in the absence of GIMAP5. Interacts with isoform 4 of CLU; this interaction releases and activates BAX and promotes cell death. In terms of assembly, forms heterodimers with BAX, BAK or BCL2; heterodimerization with BAX does not seem to be required for anti-apoptotic activity. Interacts with isoform 1 of SIVA1; the interaction inhibits the anti-apoptotic activity. Interacts with IKZF3. Interacts with RTL10/BOP. Interacts with DNM1L and CLTA; DNM1L and BCL2L1 isoform BCL-X(L) may form a complex in synaptic vesicles that also contains clathrin and MFF. Interacts (via the loop between motifs BH4 and BH3) with NLRP1 (via LRR repeats), but not with NLRP2, NLRP3, NLRP4, PYCARD, nor MEFV. Interacts with BECN1. Post-translationally, proteolytically cleaved by caspases during apoptosis. The cleaved protein, lacking the BH4 motif, has pro-apoptotic activity. Phosphorylated on Ser-62 by CDK1. This phosphorylation is partial in normal mitotic cells, but complete in G2-arrested cells upon DNA-damage, thus promoting subsequent apoptosis probably by triggering caspases-mediated proteolysis. Phosphorylated by PLK3, leading to regulate the G2 checkpoint and progression to cytokinesis during mitosis. Phosphorylation at Ser-49 appears during the S phase and G2, disappears rapidly in early mitosis during prometaphase, metaphase and early anaphase, and re-appears during telophase and cytokinesis. In terms of processing, ubiquitinated by RNF183 during prolonged ER stress, leading to degradation by the proteosome. As to expression, bcl-X(S) is expressed at high levels in cells that undergo a high rate of turnover, such as developing lymphocytes. In contrast, Bcl-X(L) is found in tissues containing long-lived postmitotic cells, such as adult brain.

It localises to the mitochondrion inner membrane. It is found in the mitochondrion outer membrane. The protein resides in the mitochondrion matrix. Its subcellular location is the cytoplasmic vesicle. The protein localises to the secretory vesicle. It localises to the synaptic vesicle membrane. It is found in the cytoplasm. The protein resides in the cytosol. Its subcellular location is the cytoskeleton. The protein localises to the microtubule organizing center. It localises to the centrosome. It is found in the nucleus membrane. Functionally, potent inhibitor of cell death. Inhibits activation of caspases. Appears to regulate cell death by blocking the voltage-dependent anion channel (VDAC) by binding to it and preventing the release of the caspase activator, CYC1, from the mitochondrial membrane. Also acts as a regulator of G2 checkpoint and progression to cytokinesis during mitosis. Isoform Bcl-X(L) also regulates presynaptic plasticity, including neurotransmitter release and recovery, number of axonal mitochondria as well as size and number of synaptic vesicle clusters. During synaptic stimulation, increases ATP availability from mitochondria through regulation of mitochondrial membrane ATP synthase F(1)F(0) activity and regulates endocytic vesicle retrieval in hippocampal neurons through association with DMN1L and stimulation of its GTPase activity in synaptic vesicles. May attenuate inflammation impairing NLRP1-inflammasome activation, hence CASP1 activation and IL1B release. In terms of biological role, isoform Bcl-X(S) promotes apoptosis. This is Bcl-2-like protein 1 (BCL2L1) from Homo sapiens (Human).